The sequence spans 51 residues: uncharacterized protein (51 aa).

Positions 1-28 are disordered; sequence MQQPQNITTSSISNNNNNNTSLTLQQQQ. A coiled-coil region spans residues 13–47; sequence SNNNNNNTSLTLQQQQEQLQQLQIKRKRNLMKQLQ.

This is an uncharacterized protein from Dictyostelium discoideum (Social amoeba).